The chain runs to 132 residues: UPF0299 membrane protein YohJ (132 aa).

4 helical membrane-spanning segments follow: residues 7–27 (IIWQYLRAFVLIYACLYAGIF), 31–51 (LLPVTIPGSIIGMLILFVLLA), 63–83 (GCYVLIRYMALLFVPIGVGVM), and 93–113 (FGPVVVSCAVSTLVVFLVVSW).

Belongs to the UPF0299 family.

It is found in the cell inner membrane. In Shigella boydii serotype 4 (strain Sb227), this protein is UPF0299 membrane protein YohJ.